We begin with the raw amino-acid sequence, 37 residues long: Large ribosomal subunit protein bL36c (37 aa).

It belongs to the bacterial ribosomal protein bL36 family.

The protein resides in the plastid. It localises to the chloroplast. In Porphyra purpurea (Red seaweed), this protein is Large ribosomal subunit protein bL36c (rpl36).